The following is a 194-amino-acid chain: Ion-translocating oxidoreductase complex subunit B (194 aa).

The hydrophobic stretch occupies residues 1–26 (MSGVLIAVAALLALAAVFGAVLGFAS). The region spanning 32–90 (EGDPIVDQIDSLLPQTQCGQCGHPGCRPYAEAIAEGEEHNRCPPGGQDTVVALSELLGR) is the 4Fe-4S domain. [4Fe-4S] cluster-binding residues include C49, C52, C57, C73, C116, C119, C122, C126, C146, C149, C152, and C156. 2 consecutive 4Fe-4S ferredoxin-type domains span residues 107–136 (KVAY…GAAK) and 137–166 (LMHT…MLEV).

It belongs to the 4Fe4S bacterial-type ferredoxin family. RnfB subfamily. In terms of assembly, the complex is composed of six subunits: RnfA, RnfB, RnfC, RnfD, RnfE and RnfG. [4Fe-4S] cluster is required as a cofactor.

It localises to the cell inner membrane. Functionally, part of a membrane-bound complex that couples electron transfer with translocation of ions across the membrane. This is Ion-translocating oxidoreductase complex subunit B from Alcanivorax borkumensis (strain ATCC 700651 / DSM 11573 / NCIMB 13689 / SK2).